Consider the following 1409-residue polypeptide: Tensin-2 (1409 aa).

The interval Met1 to Arg35 is disordered. A compositionally biased stretch (basic and acidic residues) spans Arg9–Ser20. A Phorbol-ester/DAG-type zinc finger spans residues Pro31 to Cys79. Thr91 is modified (phosphothreonine). Phosphoserine occurs at positions 118 and 120. In terms of domain architecture, Phosphatase tensin-type spans Asp122–Ser294. Cys231 functions as the Phosphocysteine intermediate in the catalytic mechanism. Residues Ser299 to Ser425 enclose the C2 tensin-type domain. Ser455 is modified (phosphoserine). At Tyr456 the chain carries Phosphotyrosine. The disordered stretch occupies residues His462–Ala536. Ser466 carries the post-translational modification Phosphoserine. Thr474 is modified (phosphothreonine). Ser481 is modified (phosphoserine). Tyr483 carries the post-translational modification Phosphotyrosine. Residues Arg491 to Met506 show a composition bias toward pro residues. Position 555 is an omega-N-methylarginine (Arg555). Disordered stretches follow at residues Ala562–Pro582, Pro812–Ala1098, and Leu1111–Val1130. Phosphoserine is present on residues Ser820, Ser825, Ser830, Ser832, Ser835, and Ser845. 2 stretches are compositionally biased toward polar residues: residues Ser900–Val918 and Arg930–Leu940. Position 910 is a phosphothreonine (Thr910). Phosphoserine is present on residues Ser931, Ser941, and Ser972. The segment covering Pro968–Ser982 has biased composition (pro residues). At Thr977 the chain carries Phosphothreonine. A phosphoserine mark is found at Ser991 and Ser1003. The segment covering Pro1046–Ala1056 has biased composition (pro residues). Positions Trp1140–Ser1247 constitute an SH2 domain. The residue at position 1182 (Thr1182) is a Phosphothreonine. Ser1247 bears the Phosphoserine mark. Residues Ala1275–Arg1408 form the PTB domain.

The protein belongs to the PTEN phosphatase protein family. Interacts with AXL. Interacts with SYK; leading to its phosphorylation. Interacts with SQSTM1 (via PB1 domain); the interaction leads to sequestration of TNS2 in cytoplasmic aggregates with SQSTM1 and promotes TNS2 ubiquitination and proteasomal degradation. Ubiquitinated following sequestration in cytoplasmic aggregates with SQSTM1, leading to proteasomal degradation. Detected in heart, kidney, brain, thymus, spleen, liver, placenta, lung, skeletal muscle and small intestine.

The protein localises to the cell junction. It is found in the focal adhesion. Its subcellular location is the cell membrane. The protein resides in the cytoplasm. The enzyme catalyses O-phospho-L-tyrosyl-[protein] + H2O = L-tyrosyl-[protein] + phosphate. In terms of biological role, tyrosine-protein phosphatase which regulates cell motility, proliferation and muscle-response to insulin. Phosphatase activity is mediated by binding to phosphatidylinositol-3,4,5-triphosphate (PtdIns(3,4,5)P3) via the SH2 domain. In muscles and under catabolic conditions, dephosphorylates IRS1 leading to its degradation and muscle atrophy. Negatively regulates PI3K-AKT pathway activation. Dephosphorylates nephrin NPHS1 in podocytes which regulates activity of the mTORC1 complex. Under normal glucose conditions, NPHS1 outcompetes IRS1 for binding to phosphatidylinositol 3-kinase (PI3K) which balances mTORC1 activity but high glucose conditions lead to up-regulation of TNS2, increased NPHS1 dephosphorylation and activation of mTORC1, contributing to podocyte hypertrophy and proteinuria. Required for correct podocyte morphology, podocyte-glomerular basement membrane interaction and integrity of the glomerular filtration barrier. Enhances RHOA activation in the presence of DLC1. Plays a role in promoting DLC1-dependent remodeling of the extracellular matrix. The protein is Tensin-2 (TNS2) of Homo sapiens (Human).